Here is a 33-residue protein sequence, read N- to C-terminus: Toxin Bcg III 25.52 (33 aa).

A disulfide bond links Cys6 and Cys28.

Its subcellular location is the secreted. The protein localises to the nematocyst. In Bunodosoma cangicum (Sea anemone), this protein is Toxin Bcg III 25.52.